We begin with the raw amino-acid sequence, 58 residues long: Teratocyte protein CftICK-III (58 aa).

The first 24 residues, 1-24 (MQKFMRLFFLGLFFILFMTTQIKA), serve as a signal peptide directing secretion. Intrachain disulfides connect cysteine 27-cysteine 42, cysteine 34-cysteine 47, and cysteine 41-cysteine 55.

In terms of tissue distribution, abundantly expressed by teratocytes, which are extra-embryonic cells released by parasitoid wasps into their hosts during larval eclosion.

The protein resides in the secreted. In terms of biological role, this endoparasitoid wasp peptide has immununosuppressive and insecticidal activities. Suppress cellular immunity which is detectable as a reduction of hemocyte encapsulation in the host. In vivo, ingestion of this peptide (probably at excessive doses) increases larval mortality and reduces leaf consumption in both lepidopteran species D.saccharalis and S.frugiperda, which are permissive and non-permissive hosts for C.flavipes, respectively. The sequence is that of Teratocyte protein CftICK-III from Cotesia flavipes (Parasitic wasp).